The primary structure comprises 362 residues: Molybdenum import ATP-binding protein ModC (362 aa).

In terms of domain architecture, ABC transporter spans 4-238 (AGEAAIRARF…LDLPIRLGED (235 aa)). Residue 38-45 (GHSGSGKT) coordinates ATP. One can recognise a Mop domain in the interval 297–362 (GTSILNTLPA…AQIKAVALVG (66 aa)).

It belongs to the ABC transporter superfamily. Molybdate importer (TC 3.A.1.8) family. In terms of assembly, the complex is composed of two ATP-binding proteins (ModC), two transmembrane proteins (ModB) and a solute-binding protein (ModA).

It localises to the cell inner membrane. The enzyme catalyses molybdate(out) + ATP + H2O = molybdate(in) + ADP + phosphate + H(+). In terms of biological role, part of the ABC transporter complex ModABC involved in molybdenum import. Responsible for energy coupling to the transport system. This is Molybdenum import ATP-binding protein ModC from Thiobacillus denitrificans (strain ATCC 25259 / T1).